We begin with the raw amino-acid sequence, 431 residues long: Citrate synthase (431 aa).

Residues His-306 and Asp-364 contribute to the active site.

Belongs to the citrate synthase family.

It catalyses the reaction oxaloacetate + acetyl-CoA + H2O = citrate + CoA + H(+). It participates in carbohydrate metabolism; tricarboxylic acid cycle; isocitrate from oxaloacetate: step 1/2. In Bartonella henselae (strain ATCC 49882 / DSM 28221 / CCUG 30454 / Houston 1) (Rochalimaea henselae), this protein is Citrate synthase (gltA).